The chain runs to 524 residues: MPVTTDPGYQGPSVHVAASLPKHDVSSSVLIVPVVSASDSDESEDRPGAVVAAAEPFLTAAAVAEIEAGLRALEATGGSDQVHRLVAPSLPVGSVLTVSLGKPRSEWPADTIRRAAGVAARSLGRAEVVITTLAELPGESGASICSAVVEGLMLGSYRFTDFRSRKTAPKDNGLRKITVLANAKDAKKQSAHGATVASAVATARDLVNTPPSHLFPAEFAKCAKTLGESAGLEVEVLDDKALQKAGYGGVIGVGQGSSRTPRLVRLIHQGSRLAKNPKNARKVALVGKGITFDTGGISIKPAASMHHMTSDMAGAAAVIATITLAAQLKLPIDVVATVPMAENMPSGTAQRPGDVLTQYGGITVEVLNTDAEGRLILADAIVRACQDNPDYLIETSTLTGAQTVALGSRIPGVMGSDKFRDRVAKTSQQVGENGWPMPLPDELKDDLKSTVADLANVSGQRFAGMLVAGAFLREFVADGVDWAHIDIAGPAYNTDSPWGYTPKGATGVPTRTMFAMLEDIANHG.

Residues lysine 288 and aspartate 293 each contribute to the Mn(2+) site. Residue lysine 300 is part of the active site. Residues aspartate 311, aspartate 370, and glutamate 372 each contribute to the Mn(2+) site. The active site involves arginine 374.

Belongs to the peptidase M17 family. Mn(2+) is required as a cofactor.

It is found in the cytoplasm. It carries out the reaction Release of an N-terminal amino acid, Xaa-|-Yaa-, in which Xaa is preferably Leu, but may be other amino acids including Pro although not Arg or Lys, and Yaa may be Pro. Amino acid amides and methyl esters are also readily hydrolyzed, but rates on arylamides are exceedingly low.. The catalysed reaction is Release of an N-terminal amino acid, preferentially leucine, but not glutamic or aspartic acids.. Its function is as follows. Presumably involved in the processing and regular turnover of intracellular proteins. Catalyzes the removal of unsubstituted N-terminal amino acids from various peptides. The protein is Probable cytosol aminopeptidase (pepA) of Mycobacterium leprae (strain TN).